A 196-amino-acid chain; its full sequence is ATP-dependent Clp protease proteolytic subunit (196 aa).

Ser-101 (nucleophile) is an active-site residue. The active site involves His-126.

It belongs to the peptidase S14 family. In terms of assembly, component of the chloroplastic Clp protease core complex.

It localises to the plastid. The protein localises to the chloroplast stroma. It catalyses the reaction Hydrolysis of proteins to small peptides in the presence of ATP and magnesium. alpha-casein is the usual test substrate. In the absence of ATP, only oligopeptides shorter than five residues are hydrolyzed (such as succinyl-Leu-Tyr-|-NHMec, and Leu-Tyr-Leu-|-Tyr-Trp, in which cleavage of the -Tyr-|-Leu- and -Tyr-|-Trp bonds also occurs).. In terms of biological role, cleaves peptides in various proteins in a process that requires ATP hydrolysis. Has a chymotrypsin-like activity. Plays a major role in the degradation of misfolded proteins. The chain is ATP-dependent Clp protease proteolytic subunit from Vitis vinifera (Grape).